The chain runs to 497 residues: Zinc finger protein 3 (497 aa).

The segment covering 1–20 has biased composition (basic and acidic residues); the sequence is MGTEKKEGLPKEETSEDSKP. The segment at 1-53 is disordered; that stretch reads MGTEKKEGLPKEETSEDSKPHGQTVEKLAQEVCHGHEFGEASEEDMSEGHLRE. Residues lysine 6 and lysine 11 each participate in a glycyl lysine isopeptide (Lys-Gly) (interchain with G-Cter in SUMO2) cross-link. 13 consecutive C2H2-type zinc fingers follow at residues 136–158, 164–186, 192–214, 220–242, 248–270, 276–298, 304–326, 332–354, 360–382, 388–410, 416–438, 444–466, and 472–494; these read HTCK…MRVH, FECK…QRIH, FACT…HRIH, YKCE…QRIH, YECN…QRIH, HECS…QKIH, YLCN…QRIH, YECS…IRIH, YVCK…ERIH, YECF…QRIH, HQCN…QKIH, YECS…QRIH, and YECQ…QSVH.

This sequence belongs to the krueppel C2H2-type zinc-finger protein family.

It is found in the nucleus. Its function is as follows. May be involved in transcriptional regulation. The chain is Zinc finger protein 3 (Zfp3) from Mus musculus (Mouse).